The primary structure comprises 102 residues: Amoebiasin-1 (102 aa).

The BC loop signature appears at 27-32; it reads NPTTGY. The short motif at 51 to 61 is the DE loop element; that stretch reads DQHAPGICGCG. An FG loop motif is present at residues 85 to 93; it reads PWAPNANDR.

This sequence belongs to the protease inhibitor I42 family. In terms of assembly, monomer. During oxidative conditions, forms homooligomers; disulfide-linked. Interacts with cysteine protease CP2. Interacts with cysteine protease CP5. Post-translationally, during oxidative conditions, cys-39, cys-58 and cys-60 react to form intra- and inter-molecular disulfide bonds resulting in the loss of the protein inhibitory activity.

The protein resides in the cytoplasm. In terms of biological role, cysteine protease inhibitor. Inhibits cysteine proteases CP1, CP2 and CP5. May protect the cytosol against cysteine proteases released by damaged intracellular vesicles. The polypeptide is Amoebiasin-1 (Entamoeba histolytica (strain ATCC 30459 / HM-1:IMSS / ABRM)).